Consider the following 173-residue polypeptide: MTEPIFMVGARGCGKTTVGRELARALGYEFVDTDIFMQHTSGMTVADVVAAEGWPGFRRRESEALQAVATPNRVVATGGGMVLLEQNRQFMRAHGTVVYLFAPAEELALRLQASPQAHQRPTLTGRPIAEEMEAVLREREALYQDVAHYVVDATQPPAAIVCELMQTMRLPAA.

Position 12–17 (12–17) interacts with ATP; it reads GCGKTT. Positions 16 and 32 each coordinate Mg(2+). Substrate contacts are provided by Asp34, Arg58, and Gly79. The interval 112-126 is LID domain; sequence QASPQAHQRPTLTGR. An ATP-binding site is contributed by Arg120. Arg139 contributes to the substrate binding site. Residue Gln155 coordinates ATP.

Monomer. Mg(2+) serves as cofactor.

Its subcellular location is the cytoplasm. It catalyses the reaction shikimate + ATP = 3-phosphoshikimate + ADP + H(+). It functions in the pathway metabolic intermediate biosynthesis; chorismate biosynthesis; chorismate from D-erythrose 4-phosphate and phosphoenolpyruvate: step 5/7. Inhibited by chloride and sulfate ions. In terms of biological role, catalyzes the specific phosphorylation of the 3-hydroxyl group of shikimic acid using ATP as a cosubstrate. The sequence is that of Shikimate kinase 2 (aroL) from Dickeya chrysanthemi (Pectobacterium chrysanthemi).